We begin with the raw amino-acid sequence, 1615 residues long: Ras-responsive element-binding protein 1 (1615 aa).

The segment at 1-44 (MMSAVMNVGKIAENGGTSQTVKSPSKSPAPNRIGRRNQETKEEK) is disordered. Residues 15–28 (GGTSQTVKSPSKSP) show a composition bias toward polar residues. 3 C2H2-type zinc fingers span residues 47–69 (YTCP…IRQH), 78–100 (HSCS…MLVH), and 106–128 (YKCS…MKIH). The tract at residues 127 to 169 (IHEKDPNSTASTTPPSPLKAKRLSSKRKFSQDAEMDREERTPA) is disordered. The segment covering 145–154 (KAKRLSSKRK) has biased composition (basic residues). 3 C2H2-type zinc fingers span residues 189–211 (YHCP…METH), 216–239 (LRCD…AVIH), and 297–319 (FICE…TETH). Residues 511–556 (SAQQASPGCISPSLPPPPLRLIKNSVETSSNSHLSQPGAKSSPSSQ) form a disordered region. The span at 535–549 (SVETSSNSHLSQPGA) shows a compositional bias: polar residues. C2H2-type zinc fingers lie at residues 622-644 (YPCR…IRSH), 650-672 (YQCN…LRTH), 732-754 (TVCK…MRTH), and 763-788 (FECK…QHLH). Disordered stretches follow at residues 1025–1044 (AADA…KSGN), 1058–1104 (DSNL…VDLE), and 1123–1162 (KFSP…KRNT). Residues 1026 to 1036 (ADASPKAASSS) are compositionally biased toward low complexity. The span at 1082-1095 (TKKRGRKKGTKNKP) shows a compositional bias: basic residues. A compositionally biased stretch (polar residues) spans 1123–1132 (KFSPFLQSTD). The C2H2-type 11 zinc finger occupies 1170–1192 (ITCPYCPRVFSWASSLQRHMLTH). Disordered regions lie at residues 1214 to 1269 (CEKE…KSLD) and 1313 to 1418 (LSRH…DKRK). A compositionally biased stretch (acidic residues) spans 1242 to 1262 (PAEEDAEEKADEYEEGPEEDS). Residues 1298 to 1320 (HACDVCGKTFKFAGALSRHKKAH) form a C2H2-type 12 zinc finger. Composition is skewed to basic and acidic residues over residues 1321 to 1339 (IRED…KSIQ) and 1388 to 1414 (GTER…TAKA). C2H2-type zinc fingers lie at residues 1419-1441 (KVCT…MRSH) and 1447-1469 (YKCQ…QRIH). The span at 1464 to 1477 (RHQRIHQKVKNTRN) shows a compositional bias: basic residues. Positions 1464–1585 (RHQRIHQKVK…SELERPSGFI (122 aa)) are disordered. Composition is skewed to basic and acidic residues over residues 1478–1493 (HGKE…RCGE) and 1566–1580 (PAKD…ELER).

This sequence belongs to the krueppel C2H2-type zinc-finger protein family. Broadly expressed, except in brain.

The protein localises to the nucleus. Its function is as follows. Transcription factor that binds specifically to the RAS-responsive elements (RRE) of gene promoters. In Gallus gallus (Chicken), this protein is Ras-responsive element-binding protein 1 (RREB1).